A 98-amino-acid polypeptide reads, in one-letter code: Protein translation factor SUI1 homolog (98 aa).

Belongs to the SUI1 family.

This Pyrococcus furiosus (strain ATCC 43587 / DSM 3638 / JCM 8422 / Vc1) protein is Protein translation factor SUI1 homolog.